Reading from the N-terminus, the 591-residue chain is MLVAGNALNCLFIDSSGFQRYLGFGVTNLNGATVKSYKQEGFVIDERGKLKRFNRKKLSRKRCGSLRGRGWKYGSGFVDGIFPVLSPIAQKILSFIQKETDPDKVADVLGALPSTHASWDDLINVSVQLRLNKKWDSIILVCEWILRKSSFQPDVICFNLLIDAYGQKFQYKEAESLYVQLLESRYVPTEDTYALLIKAYCMAGLIERAEVVLVEMQNHHVSPKTIGVTVYNAYIEGLMKRKGNTEEAIDVFQRMKRDRCKPTTETYNLMINLYGKASKSYMSWKLYCEMRSHQCKPNICTYTALVNAFAREGLCEKAEEIFEQLQEDGLEPDVYVYNALMESYSRAGYPYGAAEIFSLMQHMGCEPDRASYNIMVDAYGRAGLHSDAEAVFEEMKRLGIAPTMKSHMLLLSAYSKARDVTKCEAIVKEMSENGVEPDTFVLNSMLNLYGRLGQFTKMEKILAEMENGPCTADISTYNILINIYGKAGFLERIEELFVELKEKNFRPDVVTWTSRIGAYSRKKLYVKCLEVFEEMIDSGCAPDGGTAKVLLSACSSEEQVEQVTSVLRTMHKGVTVSSLVPKLMAKSLTVN.

12 PPR repeats span residues 154 to 188, 189 to 223, 227 to 262, 263 to 297, 298 to 332, 333 to 367, 368 to 402, 403 to 437, 438 to 472, 473 to 507, 508 to 542, and 543 to 573; these read DVIC…RYVP, TEDT…HVSP, GVTV…RCKP, TTET…QCKP, NICT…GLEP, DVYV…GCEP, DRAS…GIAP, TMKS…GVEP, DTFV…PCTA, DIST…NFRP, DVVT…GCAP, and DGGT…MHKG.

It belongs to the PPR family. P subfamily.

The sequence is that of Pentatricopeptide repeat-containing protein At2g35130 from Arabidopsis thaliana (Mouse-ear cress).